The chain runs to 60 residues: Protein YmjC (60 aa).

Residues 40–60 (HKPYPTNKMQTTSGKKVIQDR) are disordered.

In Escherichia coli (strain K12), this protein is Protein YmjC (ymjC).